A 3649-amino-acid chain; its full sequence is N-(5-amino-5-carboxypentanoyl)-L-cysteinyl-D-valine synthase (3649 aa).

The interval 401-861 (SRDRAYVTYT…LAGHLESQGH (461 aa)) is domain 1 (adipate-activating). Carrier domains lie at 783–860 (APLL…ESQG), 1859–1936 (APVS…QAAA), and 2909–2984 (APRD…LSGL). O-(pantetheine 4'-phosphoryl)serine is present on residues S820, S1896, and S2944. The segment at 1014–1937 (HHIILDGWSL…QAEHIQAAAL (924 aa)) is domain 2 (cysteine-activating). The tract at residues 2079-2985 (HHSCFDGWSW…FVDNVLSGLA (907 aa)) is domain 3 (valine-activating). S3502 functions as the For thioesterase activity in the catalytic mechanism.

The protein belongs to the ATP-dependent AMP-binding enzyme family. Pantetheine 4'-phosphate is required as a cofactor.

The catalysed reaction is L-2-aminoadipate + L-valine + L-cysteine + 3 ATP + H2O = N-[(5S)-5-amino-5-carboxypentanoyl]-L-cysteinyl-D-valine + 3 AMP + 3 diphosphate + 3 H(+). It participates in antibiotic biosynthesis; penicillin G biosynthesis; penicillin G from L-alpha-aminoadipate and L-cysteine and L-valine: step 1/3. Each of the constituent amino acids of the tripeptide acv are activated as aminoacyl-adenylates with peptide bonds formed through the participation of amino acid thioester intermediates. The polypeptide is N-(5-amino-5-carboxypentanoyl)-L-cysteinyl-D-valine synthase (pcbAB) (Amycolatopsis lactamdurans (Nocardia lactamdurans)).